A 740-amino-acid polypeptide reads, in one-letter code: Ion-translocating oxidoreductase complex subunit C (740 aa).

2 consecutive 4Fe-4S ferredoxin-type domains span residues 369–397 (GEPQEEQSCIRCSACADACPADLLPQQLY) and 407–436 (KATTHNIADCIECGACAWVCPSNIPLVQYF). Residues Cys-377, Cys-380, Cys-383, Cys-387, Cys-416, Cys-419, Cys-422, and Cys-426 each contribute to the [4Fe-4S] cluster site. A disordered region spans residues 602-717 (KLEQQQANAE…PEEQVDPRKA (116 aa)). Composition is skewed to low complexity over residues 605-615 (QQQANAEPEQQ) and 637-647 (QQQANAEPEQQ).

Belongs to the 4Fe4S bacterial-type ferredoxin family. RnfC subfamily. In terms of assembly, the complex is composed of six subunits: RsxA, RsxB, RsxC, RsxD, RsxE and RsxG. Requires [4Fe-4S] cluster as cofactor.

Its subcellular location is the cell inner membrane. Functionally, part of a membrane-bound complex that couples electron transfer with translocation of ions across the membrane. Required to maintain the reduced state of SoxR. The polypeptide is Ion-translocating oxidoreductase complex subunit C (Escherichia coli (strain ATCC 8739 / DSM 1576 / NBRC 3972 / NCIMB 8545 / WDCM 00012 / Crooks)).